The sequence spans 357 residues: UDP-N-acetylglucosamine--N-acetylmuramyl-(pentapeptide) pyrophosphoryl-undecaprenol N-acetylglucosamine transferase (357 aa).

UDP-N-acetyl-alpha-D-glucosamine-binding positions include 10–12 (TGG), Asn-124, Ser-189, Ile-244, and Gln-289.

It belongs to the glycosyltransferase 28 family. MurG subfamily.

Its subcellular location is the cell membrane. The catalysed reaction is Mur2Ac(oyl-L-Ala-gamma-D-Glu-L-Lys-D-Ala-D-Ala)-di-trans,octa-cis-undecaprenyl diphosphate + UDP-N-acetyl-alpha-D-glucosamine = beta-D-GlcNAc-(1-&gt;4)-Mur2Ac(oyl-L-Ala-gamma-D-Glu-L-Lys-D-Ala-D-Ala)-di-trans,octa-cis-undecaprenyl diphosphate + UDP + H(+). The protein operates within cell wall biogenesis; peptidoglycan biosynthesis. Cell wall formation. Catalyzes the transfer of a GlcNAc subunit on undecaprenyl-pyrophosphoryl-MurNAc-pentapeptide (lipid intermediate I) to form undecaprenyl-pyrophosphoryl-MurNAc-(pentapeptide)GlcNAc (lipid intermediate II). This is UDP-N-acetylglucosamine--N-acetylmuramyl-(pentapeptide) pyrophosphoryl-undecaprenol N-acetylglucosamine transferase from Lactococcus lactis subsp. lactis (strain IL1403) (Streptococcus lactis).